The following is a 108-amino-acid chain: Putative pterin-4-alpha-carbinolamine dehydratase (108 aa).

Belongs to the pterin-4-alpha-carbinolamine dehydratase family.

It catalyses the reaction (4aS,6R)-4a-hydroxy-L-erythro-5,6,7,8-tetrahydrobiopterin = (6R)-L-erythro-6,7-dihydrobiopterin + H2O. The polypeptide is Putative pterin-4-alpha-carbinolamine dehydratase (Bordetella avium (strain 197N)).